Consider the following 184-residue polypeptide: Large ribosomal subunit protein uL18 (184 aa).

It belongs to the universal ribosomal protein uL18 family. In terms of assembly, part of the 50S ribosomal subunit. Contacts the 5S and 23S rRNAs.

Functionally, this is one of the proteins that bind and probably mediate the attachment of the 5S RNA into the large ribosomal subunit, where it forms part of the central protuberance. The chain is Large ribosomal subunit protein uL18 from Natronomonas pharaonis (strain ATCC 35678 / DSM 2160 / CIP 103997 / JCM 8858 / NBRC 14720 / NCIMB 2260 / Gabara) (Halobacterium pharaonis).